The chain runs to 296 residues: Glycine--tRNA ligase alpha subunit (296 aa).

Belongs to the class-II aminoacyl-tRNA synthetase family. As to quaternary structure, tetramer of two alpha and two beta subunits.

The protein localises to the cytoplasm. The catalysed reaction is tRNA(Gly) + glycine + ATP = glycyl-tRNA(Gly) + AMP + diphosphate. The sequence is that of Glycine--tRNA ligase alpha subunit from Synechococcus sp. (strain CC9605).